Consider the following 344-residue polypeptide: Methionine aminopeptidase 1C, chloroplastic/mitochondrial (344 aa).

Residue His172 participates in substrate binding. The a divalent metal cation site is built by Asp189, Asp200, and His262. His269 provides a ligand contact to substrate. 2 residues coordinate a divalent metal cation: Glu296 and Glu327.

Belongs to the peptidase M24A family. Methionine aminopeptidase type 1 subfamily. Requires Co(2+) as cofactor. Zn(2+) serves as cofactor. It depends on Mn(2+) as a cofactor. The cofactor is Fe(2+). As to expression, ubiquitous.

The protein localises to the plastid. Its subcellular location is the chloroplast. It is found in the mitochondrion. The enzyme catalyses Release of N-terminal amino acids, preferentially methionine, from peptides and arylamides.. In terms of biological role, removes the N-terminal methionine from nascent proteins. The N-terminal methionine is often cleaved when the second residue in the primary sequence is small and uncharged (Met-Ala-, Cys, Gly, Pro, Ser, Thr, or Val). The polypeptide is Methionine aminopeptidase 1C, chloroplastic/mitochondrial (MAP1C) (Arabidopsis thaliana (Mouse-ear cress)).